Here is a 240-residue protein sequence, read N- to C-terminus: 2-C-methyl-D-erythritol 2,4-cyclodiphosphate synthase, apicoplast (240 aa).

A divalent metal cation is bound by residues Asp-71 and His-73. Residues 71-73 (DIH) and 115-116 (HS) contribute to the 4-CDP-2-C-methyl-D-erythritol 2-phosphate site. Position 123 (His-123) interacts with a divalent metal cation. Residues 137–139 (DIG), 142–146 (FPDKD), 181–187 (AQVPKIS), and 212–214 (GKT) each bind 4-CDP-2-C-methyl-D-erythritol 2-phosphate.

It belongs to the IspF family. As to quaternary structure, homotrimer. It depends on a divalent metal cation as a cofactor.

It localises to the plastid. Its subcellular location is the apicoplast. It carries out the reaction 4-CDP-2-C-methyl-D-erythritol 2-phosphate = 2-C-methyl-D-erythritol 2,4-cyclic diphosphate + CMP. The protein operates within isoprenoid biosynthesis; isopentenyl diphosphate biosynthesis via DXP pathway; isopentenyl diphosphate from 1-deoxy-D-xylulose 5-phosphate: step 4/6. In terms of biological role, in the mevalonate-independent isoprenoid biosynthetic pathway, converts 4-diphosphocytidyl-2C-methyl-D-erythritol 2-phosphate into 2C-methyl-D-erythritol 2,4-cyclodiphosphate and CMP. This Plasmodium falciparum (isolate 3D7) protein is 2-C-methyl-D-erythritol 2,4-cyclodiphosphate synthase, apicoplast.